The primary structure comprises 914 residues: TRPM8 channel-associated factor 3 (914 aa).

The region spanning 533–832 is the Peptidase M60 domain; the sequence is NSWVSTGLYL…TYLQLQEGFG (300 aa).

This sequence belongs to the TCAF family.

In terms of biological role, may play a role in the regulation of the cation channel TRPM8 activity. The protein is TRPM8 channel-associated factor 3 of Rattus norvegicus (Rat).